The sequence spans 344 residues: Protein RecA (344 aa).

Residue 66–73 (GPESSGKT) coordinates ATP.

This sequence belongs to the RecA family.

It localises to the cytoplasm. Its function is as follows. Can catalyze the hydrolysis of ATP in the presence of single-stranded DNA, the ATP-dependent uptake of single-stranded DNA by duplex DNA, and the ATP-dependent hybridization of homologous single-stranded DNAs. It interacts with LexA causing its activation and leading to its autocatalytic cleavage. The polypeptide is Protein RecA (Azoarcus sp. (strain BH72)).